A 186-amino-acid polypeptide reads, in one-letter code: Trafficking protein particle complex subunit 3 (186 aa).

Belongs to the TRAPP small subunits family. BET3 subfamily. As to quaternary structure, homodimer. Part of the multisubunit TRAPP (transport protein particle) complex.

The protein localises to the golgi apparatus. It localises to the cis-Golgi network. Its subcellular location is the endoplasmic reticulum. May play a role in vesicular transport from endoplasmic reticulum to Golgi. In Dictyostelium discoideum (Social amoeba), this protein is Trafficking protein particle complex subunit 3 (trappc3).